Reading from the N-terminus, the 468-residue chain is Interleukin-6 receptor subunit alpha (468 aa).

The N-terminal stretch at 1-19 (MLAVGCALLAALLAAPGAA) is a signal peptide. The Extracellular segment spans residues 20–365 (LAPRRCPAQE…VQDSSSVPLP (346 aa)). Disulfide bonds link Cys25-Cys193, Cys47-Cys96, Cys121-Cys132, and Cys165-Cys176. Positions 26-112 (PAQEVARGVL…AGTVHLLVDV (87 aa)) constitute an Ig-like C2-type domain. N-linked (GlcNAc...) asparagine glycans are attached at residues Asn55 and Asn93. 2 consecutive Fibronectin type-III domains span residues 113–217 (PPEE…LQPD) and 218–316 (PPAN…TPWT). Residues Asn221 and Asn245 are each glycosylated (N-linked (GlcNAc...) asparagine). A WSXWS motif motif is present at residues 303–307 (WSEWS). A disordered region spans residues 303–328 (WSEWSPEAMGTPWTESRSPPAENEVS). N-linked (GlcNAc...) asparagine glycosylation occurs at Asn350. O-linked (GlcNAc) threonine glycosylation occurs at Thr352. The helical transmembrane segment at 366-386 (TFLVAGGSLAFGTLLCIAIVL) threads the bilayer. At 387–468 (RFKKTWKLRA…ISNTDYFFPR (82 aa)) the chain is on the cytoplasmic side. Over residues 421–433 (TPVLVPLISPPVS) the composition is skewed to pro residues. The interval 421 to 468 (TPVLVPLISPPVSPSSLGSDNTSSHNRPDARDPRSPYDISNTDYFFPR) is disordered. Basic and acidic residues predominate over residues 446 to 455 (NRPDARDPRS). Polar residues predominate over residues 458-468 (DISNTDYFFPR).

The protein belongs to the type I cytokine receptor family. Type 3 subfamily. In terms of assembly, component of a hexamer of two molecules each of IL6, IL6R and IL6ST; first binds to IL6 to associate with the signaling subunit IL6ST. Interacts (via N-terminal ectodomain) with SORL1; this interaction may affect IL6-binding to IL6R, hence decrease IL6 'classic-signaling'. As to quaternary structure, also interacts with SORL1; this interaction leads to soluble IL6R internalization. May form a trimeric complex with the soluble SORL1 ectodomain and circulating IL6 receptor; this interaction might stabilize circulating IL6, hence promote IL6 'trans-signaling,. Post-translationally, a short soluble form is released from the membrane by proteolysis. The sIL6R is formed mostly by limited proteolysis of membrane-bound receptors, a process referred to as ectodomain shedding, but is also directly secreted from the cells after alternative mRNA splicing. mIL6R is cleaved by the proteases ADAM10 and ADAM17. Glycosylated. Glycosylation is dispensable for transport, signaling, and cell-surface turnover. Glycosylation at Asn-55 is a protease-regulatory exosite. Glycosylation is required for ADAM17-mediated proteolysis. Expressed in peripheral blood mononuclear cells and weakly found in urine and serum. 1%-20% of the total sIL6R in plasma is generated by alternative splicing.

The protein resides in the cell membrane. Its subcellular location is the secreted. Its activity is regulated as follows. Classic and trans-signaling are both inhibited by tocilizumab, a humanized monoclonal antibody that blocks interleukin IL6R signaling. Its function is as follows. Part of the receptor for interleukin 6. Binds to IL6 with low affinity, but does not transduce a signal. Signal activation necessitate an association with IL6ST. Activation leads to the regulation of the immune response, acute-phase reactions and hematopoiesis. The interaction with membrane-bound IL6R and IL6ST stimulates 'classic signaling', the restricted expression of the IL6R limits classic IL6 signaling to only a few tissues such as the liver and some cells of the immune system. Whereas the binding of IL6 and soluble IL6R to IL6ST stimulates 'trans-signaling'. Alternatively, 'cluster signaling' occurs when membrane-bound IL6:IL6R complexes on transmitter cells activate IL6ST receptors on neighboring receiver cells. Signaling via the membrane-bound IL6R is mostly regenerative and anti-inflammatory. Drives naive CD4(+) T cells to the Th17 lineage, through 'cluster signaling' by dendritic cells. In terms of biological role, soluble form of IL6 receptor (sIL6R) that acts as an agonist of IL6 activity. The IL6:sIL6R complex (hyper-IL6) binds to IL6ST/gp130 on cell surfaces and induces signaling also on cells that do not express membrane-bound IL6R in a process called IL6 'trans-signaling'. sIL6R is causative for the pro-inflammatory properties of IL6 and an important player in the development of chronic inflammatory diseases. In complex with IL6, is required for induction of VEGF production. Plays a protective role during liver injury, being required for maintenance of tissue regeneration. 'Trans-signaling' in central nervous system regulates energy and glucose homeostasis. The sequence is that of Interleukin-6 receptor subunit alpha from Homo sapiens (Human).